The sequence spans 212 residues: Nuclear phosphoprotein UL3 homolog (212 aa).

It belongs to the alphaherpesvirinae HHV-1 UL3 family. In terms of processing, phosphorylated.

It is found in the host nucleus. The chain is Nuclear phosphoprotein UL3 homolog from Equus caballus (Horse).